A 393-amino-acid chain; its full sequence is MIQTKDDFFALVNEIQSSAYYKEPLAFGIARVDRGQKNPEKILQATFPFINWKENYGSAAIFQKALHETGKLLNDESEAVYDVTKNFVAEALSYCNPWIEEAIGDAHKNVQVIKYLSTLDEEELANFKIVFLFEDAAPKSVEAVYLKLYALSTGKAALRSVNLNGAFGILHNVAWSGTTPIELDWLRENELELKMSGQYPVIDSVDKFPRFLQHIIPADNTRILDAAKVRMGAQLAAGTTVMPGASYINFNAGTLGPVMVEGRISSSAVVGKGSDVGGGASILGVLSGTSGNPISIGENCLLGANSVTGIPLGNGCIVDAGIAVLEGTKFFMSEADYEKIKEANPEWNAEYKEFFKGRELAGLSGLHFRQDSTSGQMKVFRSNKEVKLNEELH.

The active-site Acyl-anhydride intermediate is the glutamate 261. Succinyl-CoA contacts are provided by residues arginine 263, glycine 278, serine 281, alanine 304, 319 to 320 (DA), glycine 327, lysine 356, and 369 to 372 (RQDS).

It belongs to the type 2 tetrahydrodipicolinate N-succinyltransferase family. Homotrimer.

The protein resides in the cytoplasm. The catalysed reaction is (S)-2,3,4,5-tetrahydrodipicolinate + succinyl-CoA + H2O = (S)-2-succinylamino-6-oxoheptanedioate + CoA. It participates in amino-acid biosynthesis; L-lysine biosynthesis via DAP pathway; LL-2,6-diaminopimelate from (S)-tetrahydrodipicolinate (succinylase route): step 1/3. In terms of biological role, catalyzes the conversion of the cyclic tetrahydrodipicolinate (THDP) into the acyclic N-succinyl-L-2-amino-6-oxopimelate using succinyl-CoA. The polypeptide is 2,3,4,5-tetrahydropyridine-2,6-dicarboxylate N-succinyltransferase (Nitratiruptor sp. (strain SB155-2)).